Consider the following 136-residue polypeptide: Putative LysR family substrate binding domain-containing protein YagP (136 aa).

The protein belongs to the LysR transcriptional regulatory family.

The protein is Putative LysR family substrate binding domain-containing protein YagP (yagP) of Escherichia coli (strain K12).